The sequence spans 128 residues: Anti-sigma-F factor antagonist RsfA (128 aa).

The STAS domain occupies 17-128; that stretch reads LKATIQHHDS…PTTESALSAT (112 aa). C73 and C109 are joined by a disulfide.

The protein belongs to the anti-sigma-factor antagonist family. As to quaternary structure, monomer. Interacts with anti-sigma-F factor RsbW (UsfX).

Functionally, positive, redox-sensitive regulator of sigma-F (SigF) activity. When reduced binds to anti-sigma-F factor RsbW (UsfX) preventing its binding to SigF, thus activating transcription. This is Anti-sigma-F factor antagonist RsfA (rsfA) from Mycobacterium tuberculosis (strain CDC 1551 / Oshkosh).